The sequence spans 173 residues: RNA pyrophosphohydrolase (173 aa).

The Nudix hydrolase domain maps to 6–149; it reads GYRPNVGIIL…KRHVYRRALR (144 aa). The Nudix box motif lies at 38–59; the sequence is GGIRRDESPLDAMYRELAEETG.

Belongs to the Nudix hydrolase family. RppH subfamily. A divalent metal cation is required as a cofactor.

In terms of biological role, accelerates the degradation of transcripts by removing pyrophosphate from the 5'-end of triphosphorylated RNA, leading to a more labile monophosphorylated state that can stimulate subsequent ribonuclease cleavage. This is RNA pyrophosphohydrolase from Thioalkalivibrio sulfidiphilus (strain HL-EbGR7).